The following is a 90-amino-acid chain: Small ribosomal subunit protein bS16 (90 aa).

Belongs to the bacterial ribosomal protein bS16 family.

This is Small ribosomal subunit protein bS16 from Lactococcus lactis subsp. cremoris (strain SK11).